An 899-amino-acid chain; its full sequence is Linoleate 13S-lipoxygenase 2-1, chloroplastic (899 aa).

A chloroplast-targeting transit peptide spans 1–40; it reads MLKPQLQQSSQSTKALIPSWNTNPLFLASFPINILNKNFR. One can recognise a PLAT domain in the interval 78-200; sequence VQKQVNLNLS…DNPDKRIFFT (123 aa). Positions 203 to 899 constitute a Lipoxygenase domain; that stretch reads SYLPSQTPSG…GKGVPYSISI (697 aa). The interval 252–287 is disordered; sequence SNNDDAKRPVLGGKELPYPRRCKTGRPRSKKDPLSE. Positions 271 to 280 are enriched in basic residues; that stretch reads RRCKTGRPRS. Fe cation-binding residues include histidine 557, histidine 562, histidine 749, asparagine 753, and isoleucine 899.

This sequence belongs to the lipoxygenase family. In terms of assembly, monomer. Fe cation serves as cofactor. In terms of tissue distribution, expressed in leaves and floral buds.

The protein localises to the plastid. The protein resides in the chloroplast stroma. It localises to the chloroplast thylakoid. The enzyme catalyses (9Z,12Z)-octadecadienoate + O2 = (13S)-hydroperoxy-(9Z,11E)-octadecadienoate. It carries out the reaction (9Z,12Z,15Z)-octadecatrienoate + O2 = (13S)-hydroperoxy-(9Z,11E,15Z)-octadecatrienoate. It participates in lipid metabolism; oxylipin biosynthesis. Plant lipoxygenase involved in a number of diverse aspects of plant physiology including growth and development, pest resistance, and senescence. May not be involved in the bulk production of jasmonate upon wounding. Catalyzes the hydroperoxidation of lipids containing a cis,cis-1,4-pentadiene structure. Linolenic acid is the preferred substrate, before linoleic and arachidonic acids. Also has some activity with phosphatidylglycerol, but not with galactolipids. In Solanum tuberosum (Potato), this protein is Linoleate 13S-lipoxygenase 2-1, chloroplastic.